The following is a 217-amino-acid chain: Non-structural protein NS3 (217 aa).

The protein belongs to the orbivirus NS3 family.

Its function is as follows. May play a role in the release of virions from infected cells. This African horse sickness virus (AHSV) protein is Non-structural protein NS3 (Segment-10).